The sequence spans 312 residues: Acetaldehyde dehydrogenase (312 aa).

Position 11 to 14 (11 to 14 (SGNI)) interacts with NAD(+). Cysteine 129 (acyl-thioester intermediate) is an active-site residue. Residues 160-168 (SAGPGTRAN) and asparagine 287 contribute to the NAD(+) site.

It belongs to the acetaldehyde dehydrogenase family.

The catalysed reaction is acetaldehyde + NAD(+) + CoA = acetyl-CoA + NADH + H(+). The polypeptide is Acetaldehyde dehydrogenase (xylQ) (Sphingobium yanoikuyae (Sphingomonas yanoikuyae)).